We begin with the raw amino-acid sequence, 414 residues long: Esterase FrsA (414 aa).

This sequence belongs to the FrsA family.

The enzyme catalyses a carboxylic ester + H2O = an alcohol + a carboxylate + H(+). Functionally, catalyzes the hydrolysis of esters. The polypeptide is Esterase FrsA (Escherichia coli O139:H28 (strain E24377A / ETEC)).